Reading from the N-terminus, the 545-residue chain is Membrane protein insertase YidC (545 aa).

A helical transmembrane segment spans residues 6-26 (FVLFVFFIFLSFLLWEQWQID). The interval 32-69 (QAVAQTDGASRPAGDLPQRPSDDESDVTVHTEAPTQEG) is disordered. Transmembrane regions (helical) follow at residues 354–374 (FFNN…ALFF), 425–445 (GGCL…WVLV), 462–482 (LSSK…MFIQ), and 500–520 (FFPL…VLYW).

This sequence belongs to the OXA1/ALB3/YidC family. Type 1 subfamily. In terms of assembly, interacts with the Sec translocase complex via SecD. Specifically interacts with transmembrane segments of nascent integral membrane proteins during membrane integration.

It is found in the cell inner membrane. In terms of biological role, required for the insertion and/or proper folding and/or complex formation of integral membrane proteins into the membrane. Involved in integration of membrane proteins that insert both dependently and independently of the Sec translocase complex, as well as at least some lipoproteins. Aids folding of multispanning membrane proteins. The chain is Membrane protein insertase YidC from Methylococcus capsulatus (strain ATCC 33009 / NCIMB 11132 / Bath).